The sequence spans 66 residues: Large ribosomal subunit protein bL35 (66 aa).

Residues 1–16 (MPKQKTHRASAKRFKR) show a composition bias toward basic residues. The segment at 1–21 (MPKQKTHRASAKRFKRTGSGG) is disordered.

Belongs to the bacterial ribosomal protein bL35 family.

This Streptococcus mutans serotype c (strain ATCC 700610 / UA159) protein is Large ribosomal subunit protein bL35.